A 24-amino-acid chain; its full sequence is Acetylcholine receptor subunit alpha (24 aa).

Belongs to the ligand-gated ion channel (TC 1.A.9) family. Acetylcholine receptor (TC 1.A.9.1) subfamily. Alpha-1/CHRNA1 sub-subfamily. In terms of assembly, one of the alpha chains that assemble within the acetylcholine receptor, a pentamer of two alpha chains, a beta, a delta, and a gamma or epsilon chains.

Its subcellular location is the postsynaptic cell membrane. The protein localises to the cell membrane. The enzyme catalyses K(+)(in) = K(+)(out). It carries out the reaction Na(+)(in) = Na(+)(out). Its function is as follows. Upon acetylcholine binding, the AChR responds by an extensive change in conformation that affects all subunits and leads to opening of an ion-conducting channel across the plasma membrane. The chain is Acetylcholine receptor subunit alpha (chrna1) from Electrophorus electricus (Electric eel).